The sequence spans 93 residues: Putative hemolysin E-like protein (93 aa).

The protein belongs to the hemolysin E family.

The sequence is that of Putative hemolysin E-like protein from Escherichia coli O6:H1 (strain CFT073 / ATCC 700928 / UPEC).